Reading from the N-terminus, the 72-residue chain is Bradykinin-potentiating peptide BmKbpp (72 aa).

The signal sequence occupies residues 1 to 22 (MNKKTLLVIFFVTMLIVDEVNS). Positions 70–72 (RRR) are excised as a propeptide.

It belongs to the non-disulfide-bridged peptide (NDBP) superfamily. Long chain multifunctional peptide (group 2) family. Expressed by the venom gland.

It localises to the secreted. In terms of biological role, amphipathic peptide that shows bradykinin potentiating activity and antimicrobial activities against bacteria and fungi. Has higher antibacterial activities against Gram-negative than against Gram-positive bacteria. Also inhibits NADPH oxidase-dependent superoxide production (IC(50) is 0.4 uM on granulocytes stimulated with PMA, IC(50) is 0.51 uM on HL-60 cells undifferentiated and IC(50) is 0.53 uM on HL-60 cells treated with DMSO). The C-terminal peptide shows a higher bradykinin potentiating activity than the complete peptide. The chain is Bradykinin-potentiating peptide BmKbpp from Olivierus martensii (Manchurian scorpion).